The chain runs to 254 residues: Imidazole glycerol phosphate synthase subunit HisF (254 aa).

Catalysis depends on residues aspartate 12 and aspartate 132.

This sequence belongs to the HisA/HisF family. In terms of assembly, heterodimer of HisH and HisF.

The protein resides in the cytoplasm. The catalysed reaction is 5-[(5-phospho-1-deoxy-D-ribulos-1-ylimino)methylamino]-1-(5-phospho-beta-D-ribosyl)imidazole-4-carboxamide + L-glutamine = D-erythro-1-(imidazol-4-yl)glycerol 3-phosphate + 5-amino-1-(5-phospho-beta-D-ribosyl)imidazole-4-carboxamide + L-glutamate + H(+). The protein operates within amino-acid biosynthesis; L-histidine biosynthesis; L-histidine from 5-phospho-alpha-D-ribose 1-diphosphate: step 5/9. Functionally, IGPS catalyzes the conversion of PRFAR and glutamine to IGP, AICAR and glutamate. The HisF subunit catalyzes the cyclization activity that produces IGP and AICAR from PRFAR using the ammonia provided by the HisH subunit. This Symbiobacterium thermophilum (strain DSM 24528 / JCM 14929 / IAM 14863 / T) protein is Imidazole glycerol phosphate synthase subunit HisF.